The sequence spans 431 residues: uncharacterized protein (431 aa).

Disordered regions lie at residues 31–55 (VPASRIPEGGNVSASQPNGAHQAGV), 257–291 (QNGGRLSVSKDSDVYPTNGYGNGNQNRQNRSPKQD), and 365–431 (FQSP…HRKA). Residues 42-55 (VSASQPNGAHQAGV) are compositionally biased toward polar residues. Residues 412–425 (VEYRRGRSLRESRE) show a composition bias toward basic and acidic residues.

This is an uncharacterized protein from Arabidopsis thaliana (Mouse-ear cress).